A 77-amino-acid polypeptide reads, in one-letter code: Small ribosomal subunit protein bS18 (77 aa).

It belongs to the bacterial ribosomal protein bS18 family. Part of the 30S ribosomal subunit. Forms a tight heterodimer with protein bS6.

Its function is as follows. Binds as a heterodimer with protein bS6 to the central domain of the 16S rRNA, where it helps stabilize the platform of the 30S subunit. The sequence is that of Small ribosomal subunit protein bS18 from Bacillus cereus (strain ATCC 10987 / NRS 248).